We begin with the raw amino-acid sequence, 170 residues long: Cathelicidin antimicrobial peptide (170 aa).

A signal peptide spans Met1–Ala30. A propeptide spans Gln31–Arg131 (cathelin-like domain (CLD)). 2 disulfide bridges follow: Cys86–Cys97 and Cys108–Cys125. The interval Phe150–Arg162 is active core.

It belongs to the cathelicidin family. Monomer, homodimer or homotrimer (in vitro). Oligomerizes as tetra- or hexamer in solution (in vitro). In terms of processing, the N-terminus is blocked. Post-translationally, proteolytically cleaved by proteinase PRTN3 into antibacterial peptide LL-37. Proteolytically cleaved by cathepsin CTSG and neutrophil elastase ELANE. Resistant to proteolytic degradation in solution, and when bound to both zwitterionic (mimicking mammalian membranes) and negatively charged membranes (mimicking bacterial membranes). In terms of processing, after secretion onto the skin surface, the CAMP gene product is processed by a serine protease-dependent mechanism into multiple novel antimicrobial peptides distinct from and shorter than cathelicidin LL-37, such as peptides KR-20 (residues 151-170), LL-23 (residues 134-156), LL-29 (residues 134-162), KS-30 (residues 141-170), RK-31 (residues 140-170) and FF-33 (residues 138-170). The peptides act synergistically, killing bacteria at lower concentrations when present together, and maintain activity at increased salt condition. In terms of tissue distribution, expressed in neutrophilic granulocytes (at protein level). Expressed in bone marrow. Expressed in granulocytes (at protein level). Expressed by the eccrine apparatus and secreted into sweat on skin (at protein level). As to expression, expressed in bone marrow and testis.

The protein localises to the secreted. The protein resides in the vesicle. Antimicrobial protein that is an integral component of the innate immune system. Binds to bacterial lipopolysaccharides (LPS). Acts via neutrophil N-formyl peptide receptors to enhance the release of CXCL2. Postsecretory processing generates multiple cathelicidin antimicrobial peptides with various lengths which act as a topical antimicrobial defense in sweat on skin. The unprocessed precursor form, cathelicidin antimicrobial peptide, inhibits the growth of Gram-negative E.coli and E.aerogenes with efficiencies comparable to that of the mature peptide LL-37 (in vitro). Its function is as follows. Antimicrobial peptide that is an integral component of the innate immune system. Binds to bacterial lipopolysaccharides (LPS). Causes membrane permeabilization by forming transmembrane pores (in vitro). Causes lysis of E.coli. Exhibits antimicrobial activity against Gram-negative bacteria such as P.aeruginosa, S.typhimurium, E.aerogenes, E.coli and P.syringae, Gram-positive bacteria such as L.monocytogenes, S.epidermidis, S.pyogenes and S.aureus, as well as vancomycin-resistant enterococci (in vitro). Exhibits antimicrobial activity against methicillin-resistant S.aureus, P.mirabilis, and C.albicans in low-salt media, but not in media containing 100 mM NaCl (in vitro). Forms chiral supramolecular assemblies with quinolone signal (PQS) molecules of P.aeruginosa, which may lead to interference of bacterial quorum signaling and perturbance of bacterial biofilm formation. May form supramolecular fiber-like assemblies on bacterial membranes. Induces cytokine and chemokine production as well as TNF/TNFA and CSF2/GMCSF production in normal human keratinocytes. Exhibits hemolytic activity against red blood cells. In terms of biological role, exhibits antimicrobial activity against E.coli and B.megaterium (in vitro). Functionally, acts synergistically with peptides KS-30 and KR-31, killing bacteria such as S.aureus, E.coli and C.albicans at lower concentrations when present together, and maintains activity at increased salt condition. Does not have the ability to stimulate CXCL8/IL8 release from keratinocytes. Poorly active (MIC &gt; 150 uM) against E.coli strain K12. Is able to induce the pro-inflammatory cytokine TNF/TNFA or the chemokine CCL2/MCP1. Its function is as follows. Moderately antibacterial. In terms of biological role, moderately antibacterial. Acts synergistically with peptides KR-20 and KR-31, killing bacteria such as S.aureus, E.coli and C.albicans at lower concentrations when present together, and maintain activity at increased salt condition. Does not have the ability to stimulate CXCL8/IL8 release from keratinocytes. Functionally, acts synergistically with peptides KS-30 and KR-31, killing bacteria such as S.aureus, E.coli and C.albicans at lower concentrations when present together, and maintain activity at increased salt condition. Does not have the ability to stimulate CXCL8/IL8 release from keratinocytes. Inhibits the growth of E.coli and B.megaterium and exhibits hemolytic activity against human red blood cells. The chain is Cathelicidin antimicrobial peptide from Homo sapiens (Human).